The primary structure comprises 89 residues: Small ribosomal subunit protein uS15 (89 aa).

Over residues 1-21 the composition is skewed to basic and acidic residues; it reads MVLDPTQKKSVIDAHAKHEGD. Residues 1–24 are disordered; sequence MVLDPTQKKSVIDAHAKHEGDTGS.

Belongs to the universal ribosomal protein uS15 family. In terms of assembly, part of the 30S ribosomal subunit. Forms a bridge to the 50S subunit in the 70S ribosome, contacting the 23S rRNA.

In terms of biological role, one of the primary rRNA binding proteins, it binds directly to 16S rRNA where it helps nucleate assembly of the platform of the 30S subunit by binding and bridging several RNA helices of the 16S rRNA. Functionally, forms an intersubunit bridge (bridge B4) with the 23S rRNA of the 50S subunit in the ribosome. This is Small ribosomal subunit protein uS15 from Desulfovibrio desulfuricans (strain ATCC 27774 / DSM 6949 / MB).